A 154-amino-acid chain; its full sequence is Putative glutamine amidotransferase-like protein RP712 (154 aa).

Residues 1–94 (MSIEKEKFWA…QQSVWSFHNK (94 aa)) form the Glutamine amidotransferase type-1 domain.

The protein is Putative glutamine amidotransferase-like protein RP712 of Rickettsia prowazekii (strain Madrid E).